The sequence spans 54 residues: Photosystem II reaction center protein K (54 aa).

Positions 1–17 are excised as a propeptide; it reads MSFITLNNFFNTNTFFG. The chain crosses the membrane as a helical span at residues 29-49; it reads LIDVLPIIPVLFFLLAFVWQA.

This sequence belongs to the PsbK family. PSII is composed of 1 copy each of membrane proteins PsbA, PsbB, PsbC, PsbD, PsbE, PsbF, PsbH, PsbI, PsbJ, PsbK, PsbL, PsbM, PsbT, PsbY, PsbZ, Psb30/Ycf12, at least 3 peripheral proteins of the oxygen-evolving complex and a large number of cofactors. It forms dimeric complexes.

The protein localises to the plastid. The protein resides in the chloroplast thylakoid membrane. Its function is as follows. One of the components of the core complex of photosystem II (PSII). PSII is a light-driven water:plastoquinone oxidoreductase that uses light energy to abstract electrons from H(2)O, generating O(2) and a proton gradient subsequently used for ATP formation. It consists of a core antenna complex that captures photons, and an electron transfer chain that converts photonic excitation into a charge separation. This chain is Photosystem II reaction center protein K, found in Euglena gracilis.